The following is a 289-amino-acid chain: Pantothenate synthetase (289 aa).

30-37 (MGYLHEGH) lines the ATP pocket. Histidine 37 serves as the catalytic Proton donor. Glutamine 61 provides a ligand contact to (R)-pantoate. Glutamine 61 contributes to the beta-alanine binding site. Residue 147–150 (GLKD) participates in ATP binding. Glutamine 153 is a (R)-pantoate binding site. ATP-binding positions include valine 176 and 184–187 (KSSR).

Belongs to the pantothenate synthetase family. Homodimer.

It is found in the cytoplasm. The catalysed reaction is (R)-pantoate + beta-alanine + ATP = (R)-pantothenate + AMP + diphosphate + H(+). The protein operates within cofactor biosynthesis; (R)-pantothenate biosynthesis; (R)-pantothenate from (R)-pantoate and beta-alanine: step 1/1. Catalyzes the condensation of pantoate with beta-alanine in an ATP-dependent reaction via a pantoyl-adenylate intermediate. In Geobacillus thermodenitrificans (strain NG80-2), this protein is Pantothenate synthetase.